A 439-amino-acid chain; its full sequence is MSHEGEEDLLEYSDNEQEIQVDNKETAVEGTTENEATQENGEADKKGSYVGIHSTGFKDFLLKPELSRAIIDCGFEHPSEVQQHTIPQSIHGTDVLCQAKSGLGKTAVFVLSTLQQLDPVPGEVSVVVICNARELAYQIRNEYLRFSKYMPDVRTAVFYGGTPIAKDAELLKNKDTAPHIVVATPGRLKALVRDKMIDLSHVKNFVIDECDKVLEELDMRRDVQEIFRATPRDKQVMMFSATLSQEIRPICRRFLQNPLEIFVDDEAKLTLHGLQQYYIKLEEREKNRKLAQLLDDLEFNQVIIFVKSTSRANELTKLLNASNFPAITVHGHMKQEERIARYKAFKDFEKRICVSTDVFGRGIDIERINLAINYDLLNEADQYLHRVGRAGRFGTKGLAISFVSNKEDEEVLSKIQERFDVKIAEFPEEGIDPSTYLNN.

Residues 1–19 (MSHEGEEDLLEYSDNEQEI) show a composition bias toward acidic residues. The interval 1 to 48 (MSHEGEEDLLEYSDNEQEIQVDNKETAVEGTTENEATQENGEADKKGS) is disordered. The segment covering 29-40 (EGTTENEATQEN) has biased composition (polar residues). A Q motif motif is present at residues 55–83 (TGFKDFLLKPELSRAIIDCGFEHPSEVQQ). The Helicase ATP-binding domain maps to 86 to 261 (IPQSIHGTDV…RRFLQNPLEI (176 aa)). Residue 99–106 (AKSGLGKT) participates in ATP binding. A DECD box motif is present at residues 208–211 (DECD). Residues 273 to 434 (GLQQYYIKLE…EFPEEGIDPS (162 aa)) enclose the Helicase C-terminal domain.

Belongs to the DEAD box helicase family. DECD subfamily.

It is found in the nucleus. It carries out the reaction ATP + H2O = ADP + phosphate + H(+). ATP-binding RNA helicase involved in transcription elongation and required for the export of mRNA out of the nucleus. SUB2 also plays a role in pre-mRNA splicing and spliceosome assembly. May be involved in rDNA and telomeric silencing, and maintenance of genome integrity. The sequence is that of ATP-dependent RNA helicase SUB2 (SUB2) from Candida glabrata (strain ATCC 2001 / BCRC 20586 / JCM 3761 / NBRC 0622 / NRRL Y-65 / CBS 138) (Yeast).